Consider the following 173-residue polypeptide: Disulfide bond formation protein B (173 aa).

The Cytoplasmic portion of the chain corresponds to 1 to 16 (MRILSSLKTFSQSRLS). The chain crosses the membrane as a helical span at residues 17 to 33 (WLLLLAFVVFFTLCAMY). The Periplasmic portion of the chain corresponds to 34-51 (FQHVMLLAPCVMCIYERI). Residues C43 and C46 are joined by a disulfide bond. Residues 52 to 67 (AMLGIGVAALIGAIAP) form a helical membrane-spanning segment. Residues 68–74 (QNPVVRW) lie on the Cytoplasmic side of the membrane. A helical transmembrane segment spans residues 75-92 (LGFAAWGASSYKGLMLAI). Topologically, residues 93-147 (EHVNYQFNPSPFATCDLFVTFPAWAPLNQWAPNLFEAYGDCSKVVWQFLTLSMPQ) are periplasmic. C107 and C133 are disulfide-bonded. A helical transmembrane segment spans residues 148–166 (WLVVIFAANLLALAIFVVA). The Cytoplasmic portion of the chain corresponds to 167–173 (QLAKTSR).

Belongs to the DsbB family.

Its subcellular location is the cell inner membrane. Functionally, required for disulfide bond formation in some periplasmic proteins. Acts by oxidizing the DsbA protein. The sequence is that of Disulfide bond formation protein B from Vibrio cholerae serotype O1 (strain ATCC 39315 / El Tor Inaba N16961).